Here is a 131-residue protein sequence, read N- to C-terminus: Large ribosomal subunit protein bL17 (131 aa).

Belongs to the bacterial ribosomal protein bL17 family. As to quaternary structure, part of the 50S ribosomal subunit. Contacts protein L32.

The sequence is that of Large ribosomal subunit protein bL17 from Shewanella baltica (strain OS223).